Consider the following 296-residue polypeptide: Pantothenate synthetase (296 aa).

31–38 (MGYLHEGH) contacts ATP. The Proton donor role is filled by His-38. (R)-pantoate is bound at residue Gln-62. Gln-62 provides a ligand contact to beta-alanine. 148–151 (GEKD) contacts ATP. Position 154 (Gln-154) interacts with (R)-pantoate. Residues Val-177 and 185–188 (LSSR) each bind ATP.

This sequence belongs to the pantothenate synthetase family. Homodimer.

It localises to the cytoplasm. It carries out the reaction (R)-pantoate + beta-alanine + ATP = (R)-pantothenate + AMP + diphosphate + H(+). It functions in the pathway cofactor biosynthesis; (R)-pantothenate biosynthesis; (R)-pantothenate from (R)-pantoate and beta-alanine: step 1/1. Its function is as follows. Catalyzes the condensation of pantoate with beta-alanine in an ATP-dependent reaction via a pantoyl-adenylate intermediate. The polypeptide is Pantothenate synthetase (Deinococcus geothermalis (strain DSM 11300 / CIP 105573 / AG-3a)).